We begin with the raw amino-acid sequence, 209 residues long: Uracil phosphoribosyltransferase (209 aa).

Residues Arg79, Arg104, and 131 to 139 each bind 5-phospho-alpha-D-ribose 1-diphosphate; that span reads DPMLATGGS. Uracil-binding positions include Ile194 and 199–201; that span reads GDA. Asp200 provides a ligand contact to 5-phospho-alpha-D-ribose 1-diphosphate.

Belongs to the UPRTase family. Requires Mg(2+) as cofactor.

The catalysed reaction is UMP + diphosphate = 5-phospho-alpha-D-ribose 1-diphosphate + uracil. It functions in the pathway pyrimidine metabolism; UMP biosynthesis via salvage pathway; UMP from uracil: step 1/1. Its activity is regulated as follows. Allosterically activated by GTP. Catalyzes the conversion of uracil and 5-phospho-alpha-D-ribose 1-diphosphate (PRPP) to UMP and diphosphate. In Enterococcus faecalis (strain ATCC 700802 / V583), this protein is Uracil phosphoribosyltransferase.